A 94-amino-acid chain; its full sequence is Small ribosomal subunit protein uS19 (94 aa).

This sequence belongs to the universal ribosomal protein uS19 family.

In terms of biological role, protein S19 forms a complex with S13 that binds strongly to the 16S ribosomal RNA. The polypeptide is Small ribosomal subunit protein uS19 (Desulforudis audaxviator (strain MP104C)).